We begin with the raw amino-acid sequence, 310 residues long: Iron ABC transporter substrate-binding lipoprotein MtsA (310 aa).

The first 20 residues, 1 to 20, serve as a signal peptide directing secretion; the sequence is MGKKMSLILGAFLSVFLLVA. C21 is lipidated: N-palmitoyl cysteine. C21 carries the S-diacylglycerol cysteine lipid modification. Fe(2+)-binding residues include H68, H140, E206, and D281.

This sequence belongs to the bacterial solute-binding protein 9 family. Lipoprotein receptor antigen (Lrai) subfamily.

Its subcellular location is the cell membrane. Its function is as follows. Part of the ATP-binding cassette (ABC) transport system MtsABC involved in iron import. Binds iron with high affinity and specificity and delivers it to the membrane permease for translocation into the cytoplasm. Has low affinity for Zn(2+) and Cu(2+). This Streptococcus pyogenes serotype M6 (strain ATCC BAA-946 / MGAS10394) protein is Iron ABC transporter substrate-binding lipoprotein MtsA (mtsA).